The chain runs to 237 residues: Uridylate kinase (237 aa).

10–13 is an ATP binding site; it reads KLSG. Residue G51 coordinates UMP. The ATP site is built by G52 and R56. UMP is bound by residues D71 and 133 to 140; that span reads TGNPCFTT. ATP contacts are provided by T160, Y166, and D169.

It belongs to the UMP kinase family. As to quaternary structure, homohexamer.

The protein resides in the cytoplasm. The enzyme catalyses UMP + ATP = UDP + ADP. Its pathway is pyrimidine metabolism; CTP biosynthesis via de novo pathway; UDP from UMP (UMPK route): step 1/1. Inhibited by UTP. In terms of biological role, catalyzes the reversible phosphorylation of UMP to UDP. This chain is Uridylate kinase, found in Vesicomyosocius okutanii subsp. Calyptogena okutanii (strain HA).